The following is a 537-amino-acid chain: Probable E3 ubiquitin-protein ligase ARI3 (537 aa).

Residues 1 to 30 are disordered; sequence MDDDYMMLDDDYGEEEDENYSEDDNYSEAE. The interval 117–331 is TRIAD supradomain; that stretch reads KTMKCDVCME…IAGHSCGRYK (215 aa). Residues Cys-121, Cys-124, Cys-139, His-141, Cys-144, Cys-147, Cys-166, Cys-171, Cys-210, Cys-216, Cys-234, Cys-236, Cys-241, Cys-244, His-249, Cys-254, Cys-281, and Cys-284 each coordinate Zn(2+). The segment at 121–171 adopts an RING-type 1 zinc-finger fold; the sequence is CDVCMEDDLPSNVMTRMECGHRFCNDCWIGHFTVKINEGESKRILCMAHEC. The segment at 190 to 254 adopts an IBR-type zinc-finger fold; it reads DRYDRFLIES…LSESHSPCSC (65 aa). Residues 281–309 form an RING-type 2; atypical zinc finger; the sequence is CPKCSKPIQKRDGCNLMTCKCGQHFCWLC. The active site involves Cys-294. Zn(2+) is bound by residues Cys-299, Cys-301, Cys-306, Cys-309, His-317, and Cys-327.

The protein belongs to the RBR family. Ariadne subfamily. Zn(2+) serves as cofactor. Ubiquitous.

It catalyses the reaction [E2 ubiquitin-conjugating enzyme]-S-ubiquitinyl-L-cysteine + [acceptor protein]-L-lysine = [E2 ubiquitin-conjugating enzyme]-L-cysteine + [acceptor protein]-N(6)-ubiquitinyl-L-lysine.. Its pathway is protein modification; protein ubiquitination. Functionally, might act as an E3 ubiquitin-protein ligase, or as part of E3 complex, which accepts ubiquitin from specific E2 ubiquitin-conjugating enzymes and then transfers it to substrates. The polypeptide is Probable E3 ubiquitin-protein ligase ARI3 (ARI3) (Arabidopsis thaliana (Mouse-ear cress)).